Here is a 119-residue protein sequence, read N- to C-terminus: Ribonuclease P protein component (119 aa).

It belongs to the RnpA family. Consists of a catalytic RNA component (M1 or rnpB) and a protein subunit.

The enzyme catalyses Endonucleolytic cleavage of RNA, removing 5'-extranucleotides from tRNA precursor.. Functionally, RNaseP catalyzes the removal of the 5'-leader sequence from pre-tRNA to produce the mature 5'-terminus. It can also cleave other RNA substrates such as 4.5S RNA. The protein component plays an auxiliary but essential role in vivo by binding to the 5'-leader sequence and broadening the substrate specificity of the ribozyme. The chain is Ribonuclease P protein component from Beutenbergia cavernae (strain ATCC BAA-8 / DSM 12333 / CCUG 43141 / JCM 11478 / NBRC 16432 / NCIMB 13614 / HKI 0122).